The primary structure comprises 279 residues: uncharacterized protein (279 aa).

A Reverse transcriptase domain is found at 1-87 (MRVNGRNLTN…DEYIYLGRQI (87 aa)).

This is an uncharacterized protein from Caenorhabditis elegans.